The following is a 589-amino-acid chain: Phenylalanine--tRNA ligase beta subunit (589 aa).

Positions 302-379 (LPYRKEMVRA…IAYGYNNIQM (78 aa)) constitute a B5 domain. Mg(2+) contacts are provided by D357, D363, E366, and D367.

Belongs to the phenylalanyl-tRNA synthetase beta subunit family. Type 2 subfamily. As to quaternary structure, heterotetramer; dimer of two heterodimers formed by FARSA and FARSB. Mg(2+) serves as cofactor.

It is found in the cytoplasm. The enzyme catalyses tRNA(Phe) + L-phenylalanine + ATP = L-phenylalanyl-tRNA(Phe) + AMP + diphosphate + H(+). The polypeptide is Phenylalanine--tRNA ligase beta subunit (Farsb) (Mus musculus (Mouse)).